A 226-amino-acid chain; its full sequence is Lipoprotein-releasing system ATP-binding protein LolD 1 (226 aa).

Positions 6-226 (LRLDKVTRSF…TLREGKVVAA (221 aa)) constitute an ABC transporter domain. ATP is bound at residue 42–49 (GPSGAGKS).

It belongs to the ABC transporter superfamily. Lipoprotein translocase (TC 3.A.1.125) family. As to quaternary structure, the complex is composed of two ATP-binding proteins (LolD) and two transmembrane proteins (LolC and LolE).

Its subcellular location is the cell inner membrane. Its function is as follows. Part of the ABC transporter complex LolCDE involved in the translocation of mature outer membrane-directed lipoproteins, from the inner membrane to the periplasmic chaperone, LolA. Responsible for the formation of the LolA-lipoprotein complex in an ATP-dependent manner. The protein is Lipoprotein-releasing system ATP-binding protein LolD 1 of Rhodospirillum rubrum (strain ATCC 11170 / ATH 1.1.1 / DSM 467 / LMG 4362 / NCIMB 8255 / S1).